The sequence spans 725 residues: Beta-adducin (725 aa).

The tract at residues 1 to 22 (MSEDTVPEAASPPPSQGQHYFD) is disordered. A phosphoserine mark is found at S11 and S25. Phosphothreonine is present on T55. 2 positions are modified to phosphoserine: S60 and S344. The interval 425–444 (KQQKEKTRWLNTPNTYLRVN) is interaction with calmodulin. The interval 525-725 (AEKSRSPSTE…KSKKKEKVES (201 aa)) is disordered. A phosphoserine mark is found at S530 and S532. Phosphothreonine is present on T533. Position 535 is a phosphoserine (S535). Phosphothreonine is present on T561. Basic and acidic residues predominate over residues 566 to 589 (EEYKKEVERKKLEQEQEGEKDIAT). Phosphoserine occurs at positions 594, 598, 602, and 606. Positions 596–621 (VKSTPASPVQSPSKAGTKSPAVSPSK) are enriched in polar residues. Phosphothreonine is present on T612. Phosphoserine is present on residues S614, S618, and S620. Positions 622–631 (TSEDTKKTEV) are enriched in basic and acidic residues. Position 674 is a phosphothreonine (T674). Residues S678, S685, S688, S692, S696, S698, S700, S702, and S712 each carry the phosphoserine modification. Residues 687–700 (TSGPLSPEGSPSKS) show a composition bias toward low complexity. Residues 701–725 (PSKKKKKFRTPSFLKKSKKKEKVES) show a composition bias toward basic residues. Residues 703–720 (KKKKKFRTPSFLKKSKKK) form an interaction with calmodulin region.

It belongs to the aldolase class II family. Adducin subfamily. In terms of assembly, found in a complex with ADD2, DMTN and SLC2A1. Interacts with SLC2A1. Heterodimer of an alpha and a beta subunit.

Its subcellular location is the cytoplasm. It is found in the cytoskeleton. The protein localises to the cell membrane. Functionally, membrane-cytoskeleton-associated protein that promotes the assembly of the spectrin-actin network. Binds to the erythrocyte membrane receptor SLC2A1/GLUT1 and may therefore provide a link between the spectrin cytoskeleton to the plasma membrane. Binds to calmodulin. Calmodulin binds preferentially to the beta subunit. In Mus musculus (Mouse), this protein is Beta-adducin (Add2).